Reading from the N-terminus, the 351-residue chain is Nicotinate-nucleotide--dimethylbenzimidazole phosphoribosyltransferase (351 aa).

Residue glutamate 317 is the Proton acceptor of the active site.

This sequence belongs to the CobT family.

It carries out the reaction 5,6-dimethylbenzimidazole + nicotinate beta-D-ribonucleotide = alpha-ribazole 5'-phosphate + nicotinate + H(+). Its pathway is nucleoside biosynthesis; alpha-ribazole biosynthesis; alpha-ribazole from 5,6-dimethylbenzimidazole: step 1/2. Its function is as follows. Catalyzes the synthesis of alpha-ribazole-5'-phosphate from nicotinate mononucleotide (NAMN) and 5,6-dimethylbenzimidazole (DMB). This Bradyrhizobium sp. (strain ORS 278) protein is Nicotinate-nucleotide--dimethylbenzimidazole phosphoribosyltransferase.